The following is a 166-amino-acid chain: Ribosomal RNA large subunit methyltransferase H (166 aa).

Residues leucine 85, glycine 116, and 135–140 each bind S-adenosyl-L-methionine; that span reads ISKMTF.

This sequence belongs to the RNA methyltransferase RlmH family. As to quaternary structure, homodimer.

The protein resides in the cytoplasm. It carries out the reaction pseudouridine(1915) in 23S rRNA + S-adenosyl-L-methionine = N(3)-methylpseudouridine(1915) in 23S rRNA + S-adenosyl-L-homocysteine + H(+). Its function is as follows. Specifically methylates the pseudouridine at position 1915 (m3Psi1915) in 23S rRNA. The protein is Ribosomal RNA large subunit methyltransferase H of Francisella tularensis subsp. holarctica (strain FTNF002-00 / FTA).